The primary structure comprises 575 residues: Arginine--tRNA ligase (575 aa).

Positions 131-141 (ANPNGPLHIGH) match the 'HIGH' region motif.

This sequence belongs to the class-I aminoacyl-tRNA synthetase family.

The protein resides in the cytoplasm. The catalysed reaction is tRNA(Arg) + L-arginine + ATP = L-arginyl-tRNA(Arg) + AMP + diphosphate. The polypeptide is Arginine--tRNA ligase (Methanobrevibacter smithii (strain ATCC 35061 / DSM 861 / OCM 144 / PS)).